The sequence spans 240 residues: EFPDYEQPIERTVVEYPSLRDIFAWEPPTSNSIGLTWQRHAFPGVEREVLTLKAVPTSEPNNTKTAYAKLGSGKVTLDGLKPNATYLVTATANISGDTILVLSNTFHTLANGTNIINNIFHWGPVTNQSIQVRWDQIKPEETSALIVTLTAEMASDPGVERSESALFGKGKVTVDGLESDTLYIATVMVFRNGRQYFNSTRDIRTLKSGHKEVTVVTTSGSGIASTILGLLLTCVALVLA.

2 consecutive Fibronectin type-III domains span residues 1–109 (EFPD…FHTL) and 110–210 (ANGT…KSGH).

The polypeptide is 45 kDa antigen (Taenia ovis (Sheep tapeworm)).